A 314-amino-acid polypeptide reads, in one-letter code: Small ribosomal subunit biogenesis GTPase RsgA (314 aa).

The segment at 1 to 20 (MKRAPTKQPAKPAARGGERA) is disordered. The 162-residue stretch at 85–246 (SDQFKSKLFA…LIDSPGFQEF (162 aa)) folds into the CP-type G domain. Residues 134–137 (NKID) and 188–196 (GQSGMGKST) contribute to the GTP site. Residues cysteine 270, cysteine 275, histidine 277, and cysteine 283 each contribute to the Zn(2+) site.

This sequence belongs to the TRAFAC class YlqF/YawG GTPase family. RsgA subfamily. In terms of assembly, monomer. Associates with 30S ribosomal subunit, binds 16S rRNA. The cofactor is Zn(2+).

It is found in the cytoplasm. In terms of biological role, one of several proteins that assist in the late maturation steps of the functional core of the 30S ribosomal subunit. Helps release RbfA from mature subunits. May play a role in the assembly of ribosomal proteins into the subunit. Circularly permuted GTPase that catalyzes slow GTP hydrolysis, GTPase activity is stimulated by the 30S ribosomal subunit. The sequence is that of Small ribosomal subunit biogenesis GTPase RsgA from Burkholderia pseudomallei (strain K96243).